Consider the following 278-residue polypeptide: MTIIELLKALLLGFIEGMTEFAPVSSTGHMIIVDDMWLQTTDFLGKYSANTFKIVIQLGSILAVIVVFWKRLFSLIGLYKIEGEHDASGTHKLKLRHVLIGLLPAAVLGLLFEDFIDENLFSIDTVIIGLAAGAILMIAADKLGPKEPKTTSLDQISYRQAALVGLFQCISLWPGFSRSGSTISGGVFLGMNHRTAADFTFIMAVPIMFGASALSLVKNWEYINVGDLGFYVVGFIASFGFALLSIRFFLKLINKIKLVPFAIYRLVLAAVLAVIVYM.

A run of 6 helical transmembrane segments spans residues 49–69, 97–117, 120–140, 197–217, 226–246, and 258–278; these read ANTFKIVIQLGSILAVIVVFW, HVLIGLLPAAVLGLLFEDFID, LFSIDTVIIGLAAGAILMIAA, ADFTFIMAVPIMFGASALSLV, GDLGFYVVGFIASFGFALLSI, and LVPFAIYRLVLAAVLAVIVYM.

This sequence belongs to the UppP family.

The protein resides in the cell membrane. The enzyme catalyses di-trans,octa-cis-undecaprenyl diphosphate + H2O = di-trans,octa-cis-undecaprenyl phosphate + phosphate + H(+). Functionally, catalyzes the dephosphorylation of undecaprenyl diphosphate (UPP). Confers resistance to bacitracin. The sequence is that of Undecaprenyl-diphosphatase from Exiguobacterium sibiricum (strain DSM 17290 / CCUG 55495 / CIP 109462 / JCM 13490 / 255-15).